A 431-amino-acid chain; its full sequence is Glutamate-1-semialdehyde 2,1-aminomutase (431 aa).

An N6-(pyridoxal phosphate)lysine modification is found at K269.

This sequence belongs to the class-III pyridoxal-phosphate-dependent aminotransferase family. HemL subfamily. In terms of assembly, homodimer. Pyridoxal 5'-phosphate serves as cofactor.

It localises to the cytoplasm. The enzyme catalyses (S)-4-amino-5-oxopentanoate = 5-aminolevulinate. The protein operates within porphyrin-containing compound metabolism; protoporphyrin-IX biosynthesis; 5-aminolevulinate from L-glutamyl-tRNA(Glu): step 2/2. In Francisella tularensis subsp. holarctica (strain FTNF002-00 / FTA), this protein is Glutamate-1-semialdehyde 2,1-aminomutase.